Reading from the N-terminus, the 427-residue chain is 3-isopropylmalate dehydratase large subunit (427 aa).

[4Fe-4S] cluster contacts are provided by Cys-308, Cys-368, and Cys-371.

This sequence belongs to the aconitase/IPM isomerase family. LeuC type 2 subfamily. Heterodimer of LeuC and LeuD. The cofactor is [4Fe-4S] cluster.

It carries out the reaction (2R,3S)-3-isopropylmalate = (2S)-2-isopropylmalate. The protein operates within amino-acid biosynthesis; L-leucine biosynthesis; L-leucine from 3-methyl-2-oxobutanoate: step 2/4. Its function is as follows. Catalyzes the isomerization between 2-isopropylmalate and 3-isopropylmalate, via the formation of 2-isopropylmaleate. This Geobacter metallireducens (strain ATCC 53774 / DSM 7210 / GS-15) protein is 3-isopropylmalate dehydratase large subunit.